Consider the following 167-residue polypeptide: NAD(P)H-quinone oxidoreductase subunit I, chloroplastic (167 aa).

4Fe-4S ferredoxin-type domains lie at 55 to 84 and 95 to 124; these read GRIH…VDWK and LNYS…MTEE. The [4Fe-4S] cluster site is built by Cys64, Cys67, Cys70, Cys74, Cys104, Cys107, Cys110, and Cys114.

The protein belongs to the complex I 23 kDa subunit family. In terms of assembly, NDH is composed of at least 16 different subunits, 5 of which are encoded in the nucleus. [4Fe-4S] cluster serves as cofactor.

It is found in the plastid. The protein resides in the chloroplast thylakoid membrane. It carries out the reaction a plastoquinone + NADH + (n+1) H(+)(in) = a plastoquinol + NAD(+) + n H(+)(out). It catalyses the reaction a plastoquinone + NADPH + (n+1) H(+)(in) = a plastoquinol + NADP(+) + n H(+)(out). Functionally, NDH shuttles electrons from NAD(P)H:plastoquinone, via FMN and iron-sulfur (Fe-S) centers, to quinones in the photosynthetic chain and possibly in a chloroplast respiratory chain. The immediate electron acceptor for the enzyme in this species is believed to be plastoquinone. Couples the redox reaction to proton translocation, and thus conserves the redox energy in a proton gradient. The chain is NAD(P)H-quinone oxidoreductase subunit I, chloroplastic from Lobularia maritima (Sweet alyssum).